The primary structure comprises 93 residues: MFTIELILRGNPVALAVQRKDQTAAGDLYAKIRDAMNASPPRVIELTCDKVPEKHLAVMSSDVVAVQLTAAKSGSGAPMGMRAGFFAGESEDE.

The protein belongs to the UPF0367 family.

The polypeptide is UPF0367 protein gsr3177 (Gloeobacter violaceus (strain ATCC 29082 / PCC 7421)).